We begin with the raw amino-acid sequence, 341 residues long: Mitochondrial dimethyladenosine transferase 1 (341 aa).

Residues 1–27 (MASSRTLGTFRLPPLPTIREIIKLFRL) constitute a mitochondrion transit peptide. The S-adenosyl-L-methionine site is built by L38, G63, E85, K86, D111, V112, and N141.

Belongs to the class I-like SAM-binding methyltransferase superfamily. rRNA adenine N(6)-methyltransferase family. KsgA subfamily. Interacts with mitochondrial RNA polymerase POLRMT. Interacts with TFAM. Bound to the maturing mtSSU until the late stages of assembly.

It is found in the mitochondrion. The enzyme catalyses adenosine(N)/adenosine(N+1) in rRNA + 4 S-adenosyl-L-methionine = N(6)-dimethyladenosine(N)/N(6)-dimethyladenosine(N+1) in rRNA + 4 S-adenosyl-L-homocysteine + 4 H(+). In terms of biological role, mitochondrial methyltransferase which uses S-adenosyl methionine to dimethylate two highly conserved adjacent adenosine residues (A1583 and A1584) within the loop of helix 45 at the 3-prime end of 12S rRNA, thereby regulating the assembly or stability of the small subunit of the mitochondrial ribosome. Also required for basal transcription of mitochondrial DNA, probably via its interaction with POLRMT and TFAM. Stimulates transcription independently of the methyltransferase activity. The chain is Mitochondrial dimethyladenosine transferase 1 (TFB1M) from Bos taurus (Bovine).